The following is a 475-amino-acid chain: tRNA modification GTPase MnmE (475 aa).

Residues arginine 32, glutamate 97, and lysine 136 each contribute to the (6S)-5-formyl-5,6,7,8-tetrahydrofolate site. Residues 232 to 396 (GVATVIAGRP…LKSRMSSMVE (165 aa)) form the TrmE-type G domain. GTP contacts are provided by residues 242-247 (NAGKST), 261-267 (SHMPGTT), 286-289 (DTAG), and 377-379 (SAR). Residues serine 246 and threonine 267 each coordinate Mg(2+). Residue lysine 475 participates in (6S)-5-formyl-5,6,7,8-tetrahydrofolate binding.

It belongs to the TRAFAC class TrmE-Era-EngA-EngB-Septin-like GTPase superfamily. TrmE GTPase family. As to quaternary structure, homodimer. Heterotetramer of two MnmE and two MnmG subunits. Requires K(+) as cofactor.

Its subcellular location is the cytoplasm. Exhibits a very high intrinsic GTPase hydrolysis rate. Involved in the addition of a carboxymethylaminomethyl (cmnm) group at the wobble position (U34) of certain tRNAs, forming tRNA-cmnm(5)s(2)U34. This chain is tRNA modification GTPase MnmE, found in Chlorobium phaeobacteroides (strain DSM 266 / SMG 266 / 2430).